The primary structure comprises 157 residues: Large ribosomal subunit protein mL59 (157 aa).

The protein belongs to the mitochondrion-specific ribosomal protein mL59 family. Component of the mitochondrial large ribosomal subunit (mt-LSU). Mature yeast 74S mitochondrial ribosomes consist of a small (37S) and a large (54S) subunit. The 37S small subunit contains a 15S ribosomal RNA (15S mt-rRNA) and 34 different proteins. The 54S large subunit contains a 21S rRNA (21S mt-rRNA) and 46 different proteins.

The protein localises to the mitochondrion. Component of the mitochondrial ribosome (mitoribosome), a dedicated translation machinery responsible for the synthesis of mitochondrial genome-encoded proteins, including at least some of the essential transmembrane subunits of the mitochondrial respiratory chain. The mitoribosomes are attached to the mitochondrial inner membrane and translation products are cotranslationally integrated into the membrane. This Saccharomyces cerevisiae (strain ATCC 204508 / S288c) (Baker's yeast) protein is Large ribosomal subunit protein mL59 (MRPL25).